The following is a 335-amino-acid chain: GTPase Obg (335 aa).

The 158-residue stretch at 1–158 (MFVDQITLEL…RLVELELKLI (158 aa)) folds into the Obg domain. Positions 159–334 (ADIGLVGFPN…LYDLFKSKLS (176 aa)) constitute an OBG-type G domain. Residues 165–172 (GFPNAGKS), 190–194 (FTTLH), 215–218 (DIPG), 285–288 (NKID), and 315–317 (SGL) each bind GTP. Ser-172 and Thr-192 together coordinate Mg(2+).

The protein belongs to the TRAFAC class OBG-HflX-like GTPase superfamily. OBG GTPase family. Monomer. The cofactor is Mg(2+).

The protein localises to the cytoplasm. In terms of biological role, an essential GTPase which binds GTP, GDP and possibly (p)ppGpp with moderate affinity, with high nucleotide exchange rates and a fairly low GTP hydrolysis rate. Plays a role in control of the cell cycle, stress response, ribosome biogenesis and in those bacteria that undergo differentiation, in morphogenesis control. The polypeptide is GTPase Obg (Chlamydia trachomatis serovar L2 (strain ATCC VR-902B / DSM 19102 / 434/Bu)).